We begin with the raw amino-acid sequence, 285 residues long: UPF0703 protein YcgQ (285 aa).

Transmembrane regions (helical) follow at residues 4–24 (LLVL…GNLT), 34–54 (LSFI…YLFI), 89–109 (LIYV…IATL), and 210–230 (FVLR…GMLV).

The protein belongs to the UPF0703 family.

Its subcellular location is the cell membrane. This Bacillus subtilis (strain 168) protein is UPF0703 protein YcgQ (ycgQ).